Reading from the N-terminus, the 766-residue chain is 5-methyltetrahydropteroyltriglutamate--homocysteine methyltransferase (766 aa).

Residues 16–19 (RELK) and Lys124 each bind 5-methyltetrahydropteroyltri-L-glutamate. Residues 445 to 447 (IGS) and Glu498 each bind L-homocysteine. Residues 445–447 (IGS) and Glu498 contribute to the L-methionine site. Residues 529 to 530 (RC) and Trp575 each bind 5-methyltetrahydropteroyltri-L-glutamate. Asp613 serves as a coordination point for L-homocysteine. Position 613 (Asp613) interacts with L-methionine. Residue Glu619 participates in 5-methyltetrahydropteroyltri-L-glutamate binding. Zn(2+) is bound by residues His655, Cys657, and Glu679. His708 (proton donor) is an active-site residue. Cys740 contacts Zn(2+).

It belongs to the vitamin-B12 independent methionine synthase family. Zn(2+) serves as cofactor.

It catalyses the reaction 5-methyltetrahydropteroyltri-L-glutamate + L-homocysteine = tetrahydropteroyltri-L-glutamate + L-methionine. Its pathway is amino-acid biosynthesis; L-methionine biosynthesis via de novo pathway; L-methionine from L-homocysteine (MetE route): step 1/1. Its function is as follows. Catalyzes the transfer of a methyl group from 5-methyltetrahydrofolate to homocysteine resulting in methionine formation. This chain is 5-methyltetrahydropteroyltriglutamate--homocysteine methyltransferase, found in Pseudomonas syringae pv. tomato (strain ATCC BAA-871 / DC3000).